The primary structure comprises 460 residues: tRNA hydroxylation protein P (460 aa).

Belongs to the peptidase U32 family.

Involved in prephenate-dependent formation of 5-hydroxyuridine (ho5U) modification at position 34 in tRNAs, the first step in 5-carboxymethoxyuridine (cmo5U) biosynthesis. The sequence is that of tRNA hydroxylation protein P from Haemophilus influenzae (strain ATCC 51907 / DSM 11121 / KW20 / Rd).